We begin with the raw amino-acid sequence, 299 residues long: Zinc import ATP-binding protein ZnuC (299 aa).

In terms of domain architecture, ABC transporter spans 13-228; it reads VSLANAGVQR…PEYMRLFGGT (216 aa). 45–52 is a binding site for ATP; sequence GPNGSGKS.

Belongs to the ABC transporter superfamily. Zinc importer (TC 3.A.1.15.5) family. In terms of assembly, the complex is composed of two ATP-binding proteins (ZnuC), two transmembrane proteins (ZnuB) and a solute-binding protein (ZnuA).

The protein resides in the cell inner membrane. The catalysed reaction is Zn(2+)(out) + ATP(in) + H2O(in) = Zn(2+)(in) + ADP(in) + phosphate(in) + H(+)(in). Functionally, part of the ABC transporter complex ZnuABC involved in zinc import. Responsible for energy coupling to the transport system. This chain is Zinc import ATP-binding protein ZnuC, found in Agrobacterium fabrum (strain C58 / ATCC 33970) (Agrobacterium tumefaciens (strain C58)).